The primary structure comprises 136 residues: Histone H2B (136 aa).

Over residues 1-10 the composition is skewed to basic and acidic residues; that stretch reads MPPKAADKKP. The tract at residues 1 to 44 is disordered; sequence MPPKAADKKPAAKAPVASKAPEKKDAGKKTASTGEKKKRTKARR. An N6-acetyllysine; alternate mark is found at Lys-8 and Lys-9. Glycyl lysine isopeptide (Lys-Gly) (interchain with G-Cter in SUMO); alternate cross-links involve residues Lys-8 and Lys-9. Position 13 is an N6-acetyllysine (Lys-13). Lys-23 is modified (N6-acetyllysine; alternate). A Glycyl lysine isopeptide (Lys-Gly) (interchain with G-Cter in SUMO); alternate cross-link involves residue Lys-23. Lys-24 is covalently cross-linked (Glycyl lysine isopeptide (Lys-Gly) (interchain with G-Cter in SUMO)). Lys-130 is covalently cross-linked (Glycyl lysine isopeptide (Lys-Gly) (interchain with G-Cter in ubiquitin)).

This sequence belongs to the histone H2B family. In terms of assembly, the nucleosome is a histone octamer containing two molecules each of H2A, H2B, H3 and H4 assembled in one H3-H4 heterotetramer and two H2A-H2B heterodimers. The octamer wraps approximately 147 bp of DNA. Monoubiquitinated to form H2BK123ub1. H2BK123ub1 gives a specific tag for epigenetic transcriptional activation and is also prerequisite for H3K4me and H3K79me formation. H2BK123ub1 also modulates the formation of double-strand breaks during meiosis and is a prerequisite for DNA-damage checkpoint activation. Post-translationally, acetylated by GCN5 to form H2BK11ac and H2BK16ac. H2BK16ac can also be formed by ESA1. Acetylation of N-terminal lysines and particularly formation of H2BK11acK16ac has a positive effect on transcription. In terms of processing, sumoylation to form H2BK6su or H2BK7su, and probably also H2BK16su or H2BK17su, occurs preferentially near the telomeres and represses gene transcription.

It localises to the nucleus. Its subcellular location is the chromosome. Its function is as follows. Core component of nucleosome. Nucleosomes wrap and compact DNA into chromatin, limiting DNA accessibility to the cellular machineries which require DNA as a template. Histones thereby play a central role in transcription regulation, DNA repair, DNA replication and chromosomal stability. DNA accessibility is regulated via a complex set of post-translational modifications of histones, also called histone code, and nucleosome remodeling. This is Histone H2B (hh2b) from Rosellinia necatrix (White root-rot fungus).